The chain runs to 634 residues: Kelch-like protein 22 (634 aa).

An N-acetylalanine modification is found at A2. In terms of domain architecture, BTB spans 50 to 117; it reads FDVVLVVEGR…IYTSELELSL (68 aa). 6 Kelch repeats span residues 299 to 349, 350 to 399, 400 to 446, 448 to 493, 494 to 544, and 545 to 593; these read CVVG…VLNN, FVYL…VVGK, YIYA…TLQG, MYIT…ALLD, KLFV…VLDN, and RIYV…VLTL. A Phosphothreonine modification is found at T463. Y466 is modified (phosphotyrosine). Position 475 is a phosphothreonine (T475). The tract at residues 600-634 is disordered; the sequence is EQPRGTPNRSQADADFASEVMSVSDWEEFDNSSED. T605 carries the phosphothreonine modification. The span at 624–634 shows a compositional bias: acidic residues; it reads DWEEFDNSSED.

In terms of assembly, component of the BCR(KLHL22) E3 ubiquitin ligase complex, at least composed of CUL3, KLHL22 and RBX1. Interacts with PLK1. Interacts with DEPDC5 (via DEP domain); the interaction depends on amino acid availability. Interacts with YWHAE; required for the nuclear localization of KLHL22 upon amino acid starvation.

It is found in the cytoplasm. Its subcellular location is the cytosol. The protein resides in the cytoskeleton. It localises to the microtubule organizing center. The protein localises to the centrosome. It is found in the spindle. Its subcellular location is the nucleus. The protein resides in the lysosome. Its pathway is protein modification; protein ubiquitination. In terms of biological role, substrate-specific adapter of a BCR (BTB-CUL3-RBX1) E3 ubiquitin ligase complex required for chromosome alignment and localization of PLK1 at kinetochores. The BCR(KLHL22) ubiquitin ligase complex mediates monoubiquitination of PLK1, leading to PLK1 dissociation from phosphoreceptor proteins and subsequent removal from kinetochores, allowing silencing of the spindle assembly checkpoint (SAC) and chromosome segregation. Monoubiquitination of PLK1 does not lead to PLK1 degradation. The BCR(KLHL22) ubiquitin ligase complex is also responsible for the amino acid-stimulated 'Lys-48' polyubiquitination and proteasomal degradation of DEPDC5. Through the degradation of DEPDC5, releases the GATOR1 complex-mediated inhibition of the TORC1 pathway. It is therefore an amino acid-dependent activator within the amino acid-sensing branch of the TORC1 pathway, indirectly regulating different cellular processes including cell growth and autophagy. The polypeptide is Kelch-like protein 22 (Rattus norvegicus (Rat)).